We begin with the raw amino-acid sequence, 105 residues long: Large ribosomal subunit protein bL21 (105 aa).

Belongs to the bacterial ribosomal protein bL21 family. As to quaternary structure, part of the 50S ribosomal subunit. Contacts protein L20.

This protein binds to 23S rRNA in the presence of protein L20. This is Large ribosomal subunit protein bL21 from Rickettsia africae (strain ESF-5).